The primary structure comprises 303 residues: Cytosolic-abundant heat soluble protein 3 (303 aa).

Over residues 1-19 (MSSRQNQQSSSQHSSSSQQ) the composition is skewed to low complexity. The interval 1–67 (MSSRQNQQSS…PGSHSEVHEE (67 aa)) is disordered. Positions 170–257 (ARQDEQDAGM…ESAKAQTNVN (88 aa)) form a coiled coil. CAHS motif regions lie at residues 184 to 202 (YREE…LERQ) and 221 to 239 (QERE…LELE). The span at 270-280 (KGAIQTSADKS) shows a compositional bias: polar residues. The disordered stretch occupies residues 270 to 303 (KGAIQTSADKSSTTKTGPTTVTQIKHTEQHTERR). Low complexity predominate over residues 282 to 291 (TTKTGPTTVT). Positions 294–303 (KHTEQHTERR) are enriched in basic and acidic residues.

It belongs to the Cytosolic-abundant heat soluble protein (CAHS) family.

It localises to the cytoplasm. CAHS proteins are cytosolic heat soluble proteins that seem to contribute to the anhydrobiosis in tardigrades, but their specific mechanisms are yet to be identified. It is possible that protection during anhydrobiosis might occur via the stabilization of vitrifying small molecules such as sugars, but not via the direct glass transition of CAHS proteins themselves. The polypeptide is Cytosolic-abundant heat soluble protein 3 (Ramazzottius varieornatus (Water bear)).